Reading from the N-terminus, the 376-residue chain is Natterin-2 (376 aa).

Residues 1 to 18 form the signal peptide; that stretch reads MNLSVLLVTLLLLSWTSA. Residues 19–27 constitute a propeptide that is removed on maturation; it reads EKDLKVRVA.

It belongs to the natterin family. Post-translationally, contains 4 disulfide bonds. In terms of tissue distribution, expressed by the venom gland.

It is found in the secreted. Its activity is regulated as follows. Inhibited by tissue-kallikrein inhibitor TKI and trasylol. Plasma kallikrein inhibitor PKSI527 and classical inhibitors of serine-, metallo-, thiol- or aspartate-peptidases evokes a minor inhibition of the peptide digestion. Shows nociceptive, edema-inducing and kininogenase activity with release of kallidin from low molecular weight kininogen. The cleavage occurs at Met-Lys bonds. In Thalassophryne nattereri (Copper Joe toadfish), this protein is Natterin-2.